The following is a 333-amino-acid chain: uncharacterized protein (333 aa).

Residues 1-16 (MRPFLMILSVTYIASA) form the signal peptide. Asn-204 is a glycosylation site (N-linked (GlcNAc...) asparagine).

This is an uncharacterized protein from Encephalitozoon cuniculi (strain GB-M1) (Microsporidian parasite).